A 211-amino-acid chain; its full sequence is MTGTAKVSIPKAQPHKVPCVYLAGDLVFRPNAIELFDELKEICKDAGVQGVAPFDGQEGVEEMAPGAETSLKIAELDRKLMDRCDGGIFCLDPFRRAPDMDPGTAVELGYMAAQGKPLAGFTTDGRMYPEKVRSYRKQAWGDALKPRFTKGGSGSMEDADGLIVHSEGFLQNVMTEGFIRMSGGFVAVDFSIQEAFRTAIKDLAARLNSQH.

Belongs to the nucleoside deoxyribosyltransferase family.

It is found in the cytoplasm. The protein resides in the nucleus. This is an uncharacterized protein from Schizosaccharomyces pombe (strain 972 / ATCC 24843) (Fission yeast).